A 442-amino-acid polypeptide reads, in one-letter code: UDP-N-acetylmuramoylalanine--D-glutamate ligase (442 aa).

109–115 (GSNGKTT) lines the ATP pocket.

Belongs to the MurCDEF family.

It is found in the cytoplasm. The catalysed reaction is UDP-N-acetyl-alpha-D-muramoyl-L-alanine + D-glutamate + ATP = UDP-N-acetyl-alpha-D-muramoyl-L-alanyl-D-glutamate + ADP + phosphate + H(+). The protein operates within cell wall biogenesis; peptidoglycan biosynthesis. Functionally, cell wall formation. Catalyzes the addition of glutamate to the nucleotide precursor UDP-N-acetylmuramoyl-L-alanine (UMA). The protein is UDP-N-acetylmuramoylalanine--D-glutamate ligase of Solibacter usitatus (strain Ellin6076).